We begin with the raw amino-acid sequence, 1319 residues long: Protein Jumonji (1319 aa).

Over residues 1-11 (MSKERPKRNII) the composition is skewed to basic residues. Disordered stretches follow at residues 1–23 (MSKERPKRNIIQKKYDDNDGMPW), 50–130 (DGID…PSLP), 173–265 (DEED…NTNG), 351–382 (YSNNHHHNSHHATSNGHGRPQLSHSGKAQSIN), 396–478 (HKMT…KALN), 499–537 (PIQKTGPAPPPSPPAAPASPSMPQNPAIPEPARQRPKRA), and 549–599 (QQRA…RSRA). Residues 61 to 70 (ASLSNGQLNG) are compositionally biased toward polar residues. Over residues 74-88 (GHKEDGSRSQRKDGG) the composition is skewed to basic and acidic residues. The Nuclear localization signal signature appears at 96 to 102 (PAKKRPR). Residues 98 to 107 (KKRPRLHAQR) are compositionally biased toward basic residues. Polar residues predominate over residues 109–121 (FAQSQPNSPSNTP). Residues 173-185 (DEEDLEDEDEIEE) show a composition bias toward acidic residues. Residues 191-200 (VASTSCQSTP) show a composition bias toward polar residues. The segment covering 221–251 (KDKELTPRSKARESSVGRDRSERCDESEISH) has biased composition (basic and acidic residues). The segment covering 372–382 (LSHSGKAQSIN) has biased composition (polar residues). The span at 413-424 (SAREEEVVDRPV) shows a compositional bias: basic and acidic residues. A compositionally biased stretch (pro residues) spans 505 to 515 (PAPPPSPPAAP). Low complexity-rich tracts occupy residues 516 to 525 (ASPSMPQNPA) and 554 to 570 (TNPTLNRTTSTTSASKS). Basic and acidic residues predominate over residues 583 to 598 (RLDRDRERERERERSR). One can recognise a JmjN domain in the interval 607–648 (VPIFKPSSREFQDPLVYLDSFREQVESCGLCRVLPPTDWRPE). Residues 671-779 (WGPNVQKLAC…FLLSYDLLSP (109 aa)) form the ARID domain. A compositionally biased stretch (basic and acidic residues) spans 798–811 (RKRGPLEGHSDNGH). The interval 798–818 (RKRGPLEGHSDNGHHSLALPR) is disordered. The GSGFP motif motif lies at 944–948 (GSGFP). The JmjC domain maps to 954 to 1118 (PFSKHGWNLT…LGYEAAKDLK (165 aa)).

Belongs to the JARID2 family. In terms of assembly, associates with the PRC2 complex.

The protein localises to the nucleus. Regulator of histone methyltransferase complexes that plays an essential role in embryonic development. Acts by modulating histone methyltransferase activity and promoting the recruitment of histone methyltransferase complexes to their target genes. Binds DNA and mediates the recruitment of the PRC2 complex to target genes in embryonic stem cells. Does not have histone demethylase activity but regulates activity of various histone methyltransferase complexes. In embryonic stem cells, it associates with the PRC2 complex and inhibits trimethylation of 'Lys-27' of histone H3 (H3K27me3) by the PRC2 complex, thereby playing a key role in differentiation of embryonic stem cells and normal development. This chain is Protein Jumonji (jarid2b), found in Danio rerio (Zebrafish).